Reading from the N-terminus, the 146-residue chain is Large ribosomal subunit protein uL13 (146 aa).

Belongs to the universal ribosomal protein uL13 family. In terms of assembly, part of the 50S ribosomal subunit.

This protein is one of the early assembly proteins of the 50S ribosomal subunit, although it is not seen to bind rRNA by itself. It is important during the early stages of 50S assembly. In Borreliella burgdorferi (strain ATCC 35210 / DSM 4680 / CIP 102532 / B31) (Borrelia burgdorferi), this protein is Large ribosomal subunit protein uL13.